A 546-amino-acid polypeptide reads, in one-letter code: Carboxylic ester hydrolase FVEG_12634 (546 aa).

The disordered stretch occupies residues Phe-72 to Ser-91. The active-site Acyl-ester intermediate is the Ser-214.

The protein belongs to the type-B carboxylesterase/lipase family.

It catalyses the reaction a carboxylic ester + H2O = an alcohol + a carboxylate + H(+). Functionally, carboxylic ester hydrolase; part of the Fusarium detoxification of benzoxazolinone cluster 2 (FDB2) involved in the degradation of benzoxazolinones produced by the host plant. Maize, wheat, and rye produce the 2 benzoxazinone phytoanticipins 2,4-dihy-droxy-7-methoxy-1,4-benzoxazin-3-one (DIMBOA) and 2,4-dihydroxy-1,4-benzoxazin-3-one (DIBOA) that, due to their inherent instability once released, spontaneously degrade to the more stable corresponding benzoxazolinones, 6-methoxy-2-benzoxazolinone (MBOA) and 2-benzoxazolinone (BOA), respectively. The first step in the detoxification of benzoxazolinones involves the hydrolysis of the cyclic ester bond of benzoxazolinones by the FDB1 cluster gamma-lactamase MBL1 to aminophenols. MBL1 is able to convert BOA into 2-aminophenol (2-AP), as well as MBOA into 5-methoxy-2-aminophenol (2-AMP). The FDB2 cluster N-malonyltransferase FDB2/NAT1 then metabolizes aminophenols via N-malonylation to non-toxic malonamic acids. FDB2/NAT1 converts 2-AP into N-(2-hydroxyphenyl) malonamic acid (HPMA) and 2-AMP into N-(2-hydroxy-4-methoxyphenyl) malonamic acid (HMPMA). The duplicated dienlactone hydrolases DLH1 and DLH2 may provide redundant function for hydrolyzing the lactone moiety in the BOA molecule. The roles of the amidases an other enzymes encoded by the 2 FDB clusters have not been identified so far. The sequence is that of Carboxylic ester hydrolase FVEG_12634 from Gibberella moniliformis (strain M3125 / FGSC 7600) (Maize ear and stalk rot fungus).